A 165-amino-acid chain; its full sequence is Putative 4-hydroxy-4-methyl-2-oxoglutarate aldolase (165 aa).

Substrate contacts are provided by residues 80-83 (GGNL) and R102. D103 contacts a divalent metal cation.

This sequence belongs to the class II aldolase/RraA-like family. In terms of assembly, homotrimer. Requires a divalent metal cation as cofactor.

It carries out the reaction 4-hydroxy-4-methyl-2-oxoglutarate = 2 pyruvate. The catalysed reaction is oxaloacetate + H(+) = pyruvate + CO2. Functionally, catalyzes the aldol cleavage of 4-hydroxy-4-methyl-2-oxoglutarate (HMG) into 2 molecules of pyruvate. Also contains a secondary oxaloacetate (OAA) decarboxylase activity due to the common pyruvate enolate transition state formed following C-C bond cleavage in the retro-aldol and decarboxylation reactions. The polypeptide is Putative 4-hydroxy-4-methyl-2-oxoglutarate aldolase (Burkholderia mallei (strain NCTC 10247)).